Consider the following 168-residue polypeptide: Disulfide bond formation protein B 2 (168 aa).

At 1 to 9 (MLPARLRTF) the chain is on the cytoplasmic side. The chain crosses the membrane as a helical span at residues 10 to 26 (FLPACLVALAVLVASFR). The Periplasmic portion of the chain corresponds to 27–44 (LENTVGLMPCPLCLSQRL). Cys36 and Cys39 are disulfide-bonded. Residues 45–61 (LLGGYALLCFAAVLQAP) traverse the membrane as a helical segment. Residues 62–67 (GTRGIL) lie on the Cytoplasmic side of the membrane. A helical transmembrane segment spans residues 68-85 (RYARLALGCSLAGALLAA). At 86-140 (RHVWLQGAEGVNEVCPVPIGRVFEQSWSEAARQLLLGGPDCRSLAWSFLDLTLPE) the chain is on the periplasmic side. The cysteines at positions 100 and 126 are disulfide-linked. The chain crosses the membrane as a helical span at residues 141 to 159 (WSLLAFLLLAVLPLSCLLA). Residues 160 to 168 (YRFRTLART) are Cytoplasmic-facing.

Belongs to the DsbB family.

It localises to the cell inner membrane. Functionally, required for disulfide bond formation in some periplasmic proteins. Acts by oxidizing the DsbA protein. This is Disulfide bond formation protein B 2 (dsbB2) from Pseudomonas putida (strain ATCC 47054 / DSM 6125 / CFBP 8728 / NCIMB 11950 / KT2440).